The chain runs to 408 residues: Guanine nucleotide-binding protein alpha-14 subunit (408 aa).

GTP contacts are provided by residues 38–45 (HSEELEAK), 78–85 (GGPSSGKS), 201–205 (NRISK), 216–222 (VHSRKAT), 241–245 (DVGGQ), 285–288 (FPNF), 325–328 (NKVD), and Ala380. The G-alpha domain occupies 70-408 (SHIKILILGG…KANSKATGLS (339 aa)). A G1 motif region spans residues 73 to 86 (KILILGGPSSGKST). A Mg(2+)-binding site is contributed by Ser85. A G2 motif region spans residues 214–222 (DIVHSRKAT). Thr222 is a binding site for Mg(2+). The interval 237–246 (LLMVDVGGQR) is G3 motif. A G4 motif region spans residues 321-328 (LLFFNKVD). A G5 motif region spans residues 378-383 (TTATNT).

The protein belongs to the G-alpha family. As to quaternary structure, g proteins are composed of 3 units; alpha, beta and gamma. The alpha chain contains the guanine nucleotide binding site.

Guanine nucleotide-binding proteins (G proteins) are involved as modulators or transducers in various transmembrane signaling systems. The polypeptide is Guanine nucleotide-binding protein alpha-14 subunit (gpa-14) (Caenorhabditis briggsae).